Reading from the N-terminus, the 643-residue chain is Phosphomethylpyrimidine synthase (643 aa).

Residues N248, M277, Y306, H342, 362-364 (SRG), 403-406 (DGLR), and E442 contribute to the substrate site. H446 contributes to the Zn(2+) binding site. Y469 lines the substrate pocket. Zn(2+) is bound at residue H510. C590, C593, and C598 together coordinate [4Fe-4S] cluster.

This sequence belongs to the ThiC family. Homodimer. It depends on [4Fe-4S] cluster as a cofactor.

The enzyme catalyses 5-amino-1-(5-phospho-beta-D-ribosyl)imidazole + S-adenosyl-L-methionine = 4-amino-2-methyl-5-(phosphooxymethyl)pyrimidine + CO + 5'-deoxyadenosine + formate + L-methionine + 3 H(+). It functions in the pathway cofactor biosynthesis; thiamine diphosphate biosynthesis. Catalyzes the synthesis of the hydroxymethylpyrimidine phosphate (HMP-P) moiety of thiamine from aminoimidazole ribotide (AIR) in a radical S-adenosyl-L-methionine (SAM)-dependent reaction. This chain is Phosphomethylpyrimidine synthase, found in Burkholderia orbicola (strain MC0-3).